A 117-amino-acid polypeptide reads, in one-letter code: Large ribosomal subunit protein bL20 (117 aa).

It belongs to the bacterial ribosomal protein bL20 family.

Functionally, binds directly to 23S ribosomal RNA and is necessary for the in vitro assembly process of the 50S ribosomal subunit. It is not involved in the protein synthesizing functions of that subunit. This is Large ribosomal subunit protein bL20 from Vibrio campbellii (strain ATCC BAA-1116).